The sequence spans 255 residues: uncharacterized protein (255 aa).

This is an uncharacterized protein from Bacillus subtilis (strain 168).